Here is a 1358-residue protein sequence, read N- to C-terminus: Xanthine dehydrogenase (1358 aa).

Residues 18 to 107 enclose the 2Fe-2S ferredoxin-type domain; the sequence is NQLLFFLNGE…GMAVTTIEGL (90 aa). [2Fe-2S] cluster-binding residues include Cys-56, Cys-61, Cys-64, Cys-89, Cys-129, Cys-132, Cys-164, and Cys-166. Positions 253–447 constitute an FAD-binding PCMH-type domain; that stretch reads FTGSRVTWYT…ESVFIPYTRP (195 aa). Residues 281–288, Phe-366, 376–380, Asp-389, Leu-437, and Lys-455 each bind FAD; these read IVVGNTEI and SIGGN. Residues Gln-805 and Phe-836 each coordinate Mo-molybdopterin. Glu-840 and Arg-918 together coordinate substrate. Arg-950 serves as a coordination point for Mo-molybdopterin. Substrate-binding residues include Tyr-952 and Thr-1048. Mo-molybdopterin is bound at residue Ala-1117. Catalysis depends on Glu-1302, which acts as the Proton acceptor.

This sequence belongs to the xanthine dehydrogenase family. Homodimer. The cofactor is FAD. Mo-molybdopterin is required as a cofactor. It depends on [2Fe-2S] cluster as a cofactor.

Its subcellular location is the peroxisome. It carries out the reaction xanthine + NAD(+) + H2O = urate + NADH + H(+). The catalysed reaction is hypoxanthine + NAD(+) + H2O = xanthine + NADH + H(+). Its function is as follows. Key enzyme in purine degradation. Catalyzes the oxidation of hypoxanthine to xanthine. Catalyzes the oxidation of xanthine to uric acid. This is Xanthine dehydrogenase (xdh) from Dictyostelium discoideum (Social amoeba).